We begin with the raw amino-acid sequence, 475 residues long: Cytosolic enolase 3 (475 aa).

An N-acetylserine modification is found at serine 2. 2 residues coordinate substrate: histidine 200 and glutamate 209. Aspartate 252 serves as the catalytic Proton donor. Positions 287, 336, and 361 each coordinate Mg(2+). Residues glutamate 336 and aspartate 361 each coordinate substrate. Residue lysine 386 is the Proton acceptor of the active site. Residues 413 to 416 (SHRC) and lysine 437 contribute to the substrate site.

This sequence belongs to the enolase family. Homodimer. Requires Mg(2+) as cofactor.

The protein resides in the cytoplasm. The protein localises to the nucleus. The enzyme catalyses (2R)-2-phosphoglycerate = phosphoenolpyruvate + H2O. The protein operates within carbohydrate degradation; glycolysis; pyruvate from D-glyceraldehyde 3-phosphate: step 4/5. This chain is Cytosolic enolase 3 (ENO3), found in Arabidopsis thaliana (Mouse-ear cress).